Consider the following 351-residue polypeptide: tRNA-specific 2-thiouridylase MnmA (351 aa).

ATP-binding positions include 7 to 14 and L33; that span reads GLSGGVDS. C94 (nucleophile) is an active-site residue. C94 and C193 are joined by a disulfide. G119 contacts ATP. The interval 143–145 is interaction with tRNA; the sequence is KDQ. Catalysis depends on C193, which acts as the Cysteine persulfide intermediate. The segment at 298-299 is interaction with tRNA; sequence RY.

Belongs to the MnmA/TRMU family.

It localises to the cytoplasm. It carries out the reaction S-sulfanyl-L-cysteinyl-[protein] + uridine(34) in tRNA + AH2 + ATP = 2-thiouridine(34) in tRNA + L-cysteinyl-[protein] + A + AMP + diphosphate + H(+). Its function is as follows. Catalyzes the 2-thiolation of uridine at the wobble position (U34) of tRNA, leading to the formation of s(2)U34. The chain is tRNA-specific 2-thiouridylase MnmA from Nostoc punctiforme (strain ATCC 29133 / PCC 73102).